Reading from the N-terminus, the 559-residue chain is SH3 domain-binding protein 2 (559 aa).

The PH domain maps to 26 to 130 (GVAKAGYLHK…WMAFVRREIG (105 aa)). Positions 164–449 (LSSYPMDNED…EDSDEDYEKV (286 aa)) are disordered. Acidic residues predominate over residues 170–184 (DNEDYEHEDEDDSYL). Residues Y174 and Y183 each carry the phosphotyrosine; by SYK modification. An SH3-binding motif is present at residues 201-210 (PPAYPPPPVP). Composition is skewed to pro residues over residues 202-213 (PAYPPPPVPVPR) and 233-242 (PLLPPPPPKR). Positions 252–265 (EDAKDALGLRRVEP) are enriched in basic and acidic residues. Phosphoserine is present on S277. Positions 313–327 (TSSVSSSTTMAVATS) are enriched in low complexity. Over residues 360–371 (KIAEEPSPREAA) the composition is skewed to basic and acidic residues. A compositionally biased stretch (pro residues) spans 375–386 (PVPPVAPRPPVQ). Phosphoserine occurs at positions 414 and 425. Over residues 437–446 (TGEEDSDEDY) the composition is skewed to acidic residues. Y446 carries the post-translational modification Phosphotyrosine; by SYK. In terms of domain architecture, SH2 spans 455–553 (VFVNTTESCE…HQSLLLRHPY (99 aa)).

In terms of processing, phosphorylated. Phosphorylation at Tyr-446 may stimulate the activity of the LYN kinase.

Its function is as follows. Binds differentially to the SH3 domains of certain proteins of signal transduction pathways. Binds to phosphatidylinositols; linking the hemopoietic tyrosine kinase fes to the cytoplasmic membrane in a phosphorylation dependent mechanism. In Mus musculus (Mouse), this protein is SH3 domain-binding protein 2 (Sh3bp2).